Consider the following 367-residue polypeptide: D-alanine--D-alanine ligase (367 aa).

An ATP-grasp domain is found at 150 to 357 (KKLLTAAGLP…YPTLLATMVE (208 aa)). ATP is bound at residue 178 to 233 (RERLGLPVFVKPSRGGSSIGVSRVTAWDALPAAIELARRHDPKVIVEAAIPGRELE). Residues Asp312, Glu324, and Asn326 each contribute to the Mg(2+) site.

This sequence belongs to the D-alanine--D-alanine ligase family. Requires Mg(2+) as cofactor. It depends on Mn(2+) as a cofactor.

The protein localises to the cytoplasm. It catalyses the reaction 2 D-alanine + ATP = D-alanyl-D-alanine + ADP + phosphate + H(+). Its pathway is cell wall biogenesis; peptidoglycan biosynthesis. In terms of biological role, cell wall formation. The sequence is that of D-alanine--D-alanine ligase from Mycolicibacterium vanbaalenii (strain DSM 7251 / JCM 13017 / BCRC 16820 / KCTC 9966 / NRRL B-24157 / PYR-1) (Mycobacterium vanbaalenii).